A 199-amino-acid polypeptide reads, in one-letter code: Crossover junction endodeoxyribonuclease RuvC (199 aa).

Active-site residues include Asp-7, Glu-68, and Asp-141. Residues Asp-7, Glu-68, and Asp-141 each contribute to the Mg(2+) site.

It belongs to the RuvC family. In terms of assembly, homodimer which binds Holliday junction (HJ) DNA. The HJ becomes 2-fold symmetrical on binding to RuvC with unstacked arms; it has a different conformation from HJ DNA in complex with RuvA. In the full resolvosome a probable DNA-RuvA(4)-RuvB(12)-RuvC(2) complex forms which resolves the HJ. Mg(2+) serves as cofactor.

It localises to the cytoplasm. It catalyses the reaction Endonucleolytic cleavage at a junction such as a reciprocal single-stranded crossover between two homologous DNA duplexes (Holliday junction).. In terms of biological role, the RuvA-RuvB-RuvC complex processes Holliday junction (HJ) DNA during genetic recombination and DNA repair. Endonuclease that resolves HJ intermediates. Cleaves cruciform DNA by making single-stranded nicks across the HJ at symmetrical positions within the homologous arms, yielding a 5'-phosphate and a 3'-hydroxyl group; requires a central core of homology in the junction. The consensus cleavage sequence is 5'-(A/T)TT(C/G)-3'. Cleavage occurs on the 3'-side of the TT dinucleotide at the point of strand exchange. HJ branch migration catalyzed by RuvA-RuvB allows RuvC to scan DNA until it finds its consensus sequence, where it cleaves and resolves the cruciform DNA. In Saccharopolyspora erythraea (strain ATCC 11635 / DSM 40517 / JCM 4748 / NBRC 13426 / NCIMB 8594 / NRRL 2338), this protein is Crossover junction endodeoxyribonuclease RuvC.